The primary structure comprises 247 residues: 5'-nucleotidase SurE (247 aa).

A divalent metal cation-binding residues include Asp-8, Asp-9, Ser-39, and Asn-91.

This sequence belongs to the SurE nucleotidase family. The cofactor is a divalent metal cation.

Its subcellular location is the cytoplasm. The enzyme catalyses a ribonucleoside 5'-phosphate + H2O = a ribonucleoside + phosphate. Its function is as follows. Nucleotidase that shows phosphatase activity on nucleoside 5'-monophosphates. In Chromobacterium violaceum (strain ATCC 12472 / DSM 30191 / JCM 1249 / CCUG 213 / NBRC 12614 / NCIMB 9131 / NCTC 9757 / MK), this protein is 5'-nucleotidase SurE.